A 132-amino-acid polypeptide reads, in one-letter code: FPRL1 inhibitory protein (132 aa).

Residues 1 to 28 (MKKNITKVIIASTVIATGLLTQTNDAKA) form the signal peptide.

Belongs to the CHIPS/FLIPr family.

It is found in the secreted. Its function is as follows. May be involved in countering the first line of host defense mechanisms. Impairs the leukocyte response to FPRL1 agonists by binding directly to host FPRL1. This chain is FPRL1 inhibitory protein (flr), found in Staphylococcus aureus (strain MW2).